The primary structure comprises 416 residues: Homeobox protein ceh-62 (416 aa).

Positions Thr-103–Ile-113 are enriched in low complexity. Disordered stretches follow at residues Thr-103–Arg-144 and Phe-178–Thr-247. The span at Gln-118–Asn-127 shows a compositional bias: polar residues. A DNA-binding region (homeobox) is located at residues Ser-130–Arg-189. Over residues Asn-193–Pro-218 the composition is skewed to low complexity. Residues Thr-219–Asp-240 are compositionally biased toward polar residues.

Its subcellular location is the nucleus. In Caenorhabditis elegans, this protein is Homeobox protein ceh-62.